Reading from the N-terminus, the 138-residue chain is Large ribosomal subunit protein uL16 (138 aa).

Positions 1–13 are enriched in basic residues; the sequence is MLQPKRRKYRKEQ. The segment at 1-24 is disordered; the sequence is MLQPKRRKYRKEQKGRNTGKATRG.

The protein belongs to the universal ribosomal protein uL16 family. Part of the 50S ribosomal subunit.

Its function is as follows. Binds 23S rRNA and is also seen to make contacts with the A and possibly P site tRNAs. This is Large ribosomal subunit protein uL16 from Burkholderia ambifaria (strain ATCC BAA-244 / DSM 16087 / CCUG 44356 / LMG 19182 / AMMD) (Burkholderia cepacia (strain AMMD)).